The primary structure comprises 564 residues: CTP synthase (564 aa).

Residues 1-272 (MARPKNVKHI…DIRVLKKLGL (272 aa)) form an amidoligase domain region. A CTP-binding site is contributed by serine 18. Serine 18 is a UTP binding site. Position 19–24 (19–24 (SLGKGI)) interacts with ATP. Tyrosine 59 lines the L-glutamine pocket. Aspartate 76 serves as a coordination point for ATP. Aspartate 76 and glutamate 146 together coordinate Mg(2+). Residues 153-155 (DIE), 193-198 (KTKPTQ), and lysine 229 each bind CTP. Residues 193–198 (KTKPTQ) and lysine 229 contribute to the UTP site. In terms of domain architecture, Glutamine amidotransferase type-1 spans 299–543 (TIAICGKYTE…VAAAKEFAHG (245 aa)). Glycine 363 is an L-glutamine binding site. Cysteine 390 acts as the Nucleophile; for glutamine hydrolysis in catalysis. Residues 391-394 (LGMQ), glutamate 414, and arginine 471 contribute to the L-glutamine site. Active-site residues include histidine 516 and glutamate 518.

This sequence belongs to the CTP synthase family. Homotetramer.

The catalysed reaction is UTP + L-glutamine + ATP + H2O = CTP + L-glutamate + ADP + phosphate + 2 H(+). It carries out the reaction L-glutamine + H2O = L-glutamate + NH4(+). The enzyme catalyses UTP + NH4(+) + ATP = CTP + ADP + phosphate + 2 H(+). It functions in the pathway pyrimidine metabolism; CTP biosynthesis via de novo pathway; CTP from UDP: step 2/2. Its activity is regulated as follows. Allosterically activated by GTP, when glutamine is the substrate; GTP has no effect on the reaction when ammonia is the substrate. The allosteric effector GTP functions by stabilizing the protein conformation that binds the tetrahedral intermediate(s) formed during glutamine hydrolysis. Inhibited by the product CTP, via allosteric rather than competitive inhibition. Functionally, catalyzes the ATP-dependent amination of UTP to CTP with either L-glutamine or ammonia as the source of nitrogen. Regulates intracellular CTP levels through interactions with the four ribonucleotide triphosphates. The sequence is that of CTP synthase from Prosthecochloris aestuarii (strain DSM 271 / SK 413).